The chain runs to 1193 residues: Major DNA-binding protein (1193 aa).

A Required for filament formation motif is present at residues Phe-827–Trp-828. Residues Ala-1125–Ala-1145 are disordered. Residues Pro-1170–Leu-1193 are required for nuclear localization.

Belongs to the herpesviridae major DNA-binding protein family. In terms of assembly, homooligomers. Forms double-helical filaments necessary for the formation of replication compartments within the host nucleus. Interacts with the origin-binding protein. Interacts with the helicase primase complex; this interaction stimulates primer synthesis activity of the helicase-primase complex. Interacts with the DNA polymerase. Interacts with the alkaline exonuclease; this interaction increases its nuclease processivity.

It is found in the host nucleus. Its function is as follows. Plays several crucial roles in viral infection. Participates in the opening of the viral DNA origin to initiate replication by interacting with the origin-binding protein. May disrupt loops, hairpins and other secondary structures present on ssDNA to reduce and eliminate pausing of viral DNA polymerase at specific sites during elongation. Promotes viral DNA recombination by performing strand-transfer, characterized by the ability to transfer a DNA strand from a linear duplex to a complementary single-stranded DNA circle. Can also catalyze the renaturation of complementary single strands. Additionally, reorganizes the host cell nucleus, leading to the formation of prereplicative sites and replication compartments. This process is driven by the protein which can form double-helical filaments in the absence of DNA. In Tupaiid herpesvirus (strain 2) (TuHV-2), this protein is Major DNA-binding protein.